We begin with the raw amino-acid sequence, 228 residues long: Type II methyltransferase M.HhaII (228 aa).

Belongs to the N(4)/N(6)-methyltransferase family.

The enzyme catalyses a 2'-deoxyadenosine in DNA + S-adenosyl-L-methionine = an N(6)-methyl-2'-deoxyadenosine in DNA + S-adenosyl-L-homocysteine + H(+). In terms of biological role, a beta subtype methylase, recognizes the double-stranded sequence 5'-GANTC-3', methylates A-2 on both strands, and protects the DNA from cleavage by the HhaII endonuclease. The protein is Type II methyltransferase M.HhaII of Haemophilus parahaemolyticus.